The following is a 234-amino-acid chain: Inosine triphosphate pyrophosphatase (234 aa).

11-16 (SGNKGK) provides a ligand contact to ITP. Residue E40 coordinates Mg(2+). ITP-binding positions include K53, 81–82 (DT), K98, 176–179 (FGWD), K203, and 208–209 (HR).

It belongs to the HAM1 NTPase family. As to quaternary structure, homodimer. The cofactor is Mg(2+). Mn(2+) is required as a cofactor.

The protein localises to the cytoplasm. The catalysed reaction is ITP + H2O = IMP + diphosphate + H(+). It catalyses the reaction dITP + H2O = dIMP + diphosphate + H(+). It carries out the reaction XTP + H2O = XMP + diphosphate + H(+). Its function is as follows. Pyrophosphatase that hydrolyzes non-canonical purine nucleotides such as inosine triphosphate (ITP), deoxyinosine triphosphate (dITP) or xanthosine 5'-triphosphate (XTP) to their respective monophosphate derivatives. The enzyme does not distinguish between the deoxy- and ribose forms. Probably excludes non-canonical purines from RNA and DNA precursor pools, thus preventing their incorporation into RNA and DNA and avoiding chromosomal lesions. This chain is Inosine triphosphate pyrophosphatase, found in Leishmania major.